We begin with the raw amino-acid sequence, 237 residues long: Probable transcriptional regulatory protein Bpro_2928 (237 aa).

This sequence belongs to the TACO1 family.

It localises to the cytoplasm. This is Probable transcriptional regulatory protein Bpro_2928 from Polaromonas sp. (strain JS666 / ATCC BAA-500).